The sequence spans 609 residues: Zinc metalloproteinase-disintegrin-like VAP2B (609 aa).

A signal peptide spans 1–20; that stretch reads MIQVLLVTICLAAFPYQGSS. A propeptide spanning residues 21-189 is cleaved from the precursor; that stretch reads IILESGNVND…KKASQLVVTA (169 aa). Glu190 is subject to Pyrrolidone carboxylic acid (Glu). Positions 198–393 constitute a Peptidase M12B domain; that stretch reads RFVELFLVVD…HNPECILNEP (196 aa). The Ca(2+) site is built by Glu201 and Asp285. 3 cysteine pairs are disulfide-bonded: Cys308/Cys388, Cys348/Cys372, and Cys350/Cys355. His333 contributes to the Zn(2+) binding site. Residue Glu334 is part of the active site. His337 and His343 together coordinate Zn(2+). Asn371 is a glycosylation site (N-linked (GlcNAc...) asparagine). Ca(2+) is bound by residues Cys388, Asn391, Val403, Asn406, Leu408, Glu410, Glu413, and Asp416. The region spanning 401 to 487 is the Disintegrin domain; sequence PPVCGNELLE…ECPADVFHKN (87 aa). Cystine bridges form between Cys404-Cys423, Cys404-Cys433, Cys415-Cys428, Cys415-Cys433, Cys417-Cys423, Cys427-Cys450, Cys441-Cys447, Cys446-Cys472, Cys459-Cys479, Cys466-Cys491, Cys466-Cys498, Cys491-Cys503, Cys498-Cys503, Cys510-Cys525, Cys510-Cys560, Cys525-Cys571, Cys538-Cys548, Cys548-Cys555, Cys555-Cys597, Cys560-Cys571, Cys591-Cys602, and Cys597-Cys602. Positions 459 to 472 are inhibits platelet aggregation; the sequence is CRASMSECDPAEHC. The short motif at 465–467 is the D/ECD-tripeptide element; that stretch reads ECD. The Ca(2+) site is built by Asp467, Pro468, Glu470, Asp482, and Val483.

This sequence belongs to the venom metalloproteinase (M12B) family. P-III subfamily. P-IIIb sub-subfamily. In terms of assembly, monomer or heterodimer; non-covalently linked. Interacts with fibrillar collagen. Zn(2+) is required as a cofactor. In terms of processing, the N-terminus is blocked. Expressed by the venom gland.

The protein resides in the secreted. Zinc metalloprotease that abolishes platelet aggregation induced by collagen, but has no effect on platelet aggregation induced by ADP or thromboxane analog. This inhibition may be due to its ability to bind collagen and block the binding site on collagen for platelets and/or to its ability to bind to the platelet alpha-2/beta-1 collagen receptor (ITGA2/ITGB1) to block its interaction with collagen and hence prevent platelet stimulation. In terms of biological role, abolishes platelet aggregation induced by collagen (IC(50)=66 nM) but not ADP-stimulated platelet aggregation. This inhibition may be due to its ability to bind collagen and block the binding site on collagen for platelets and/or to its ability to bind to the platelet alpha-2/beta-1 collagen receptor (ITGA2/ITGB1) to block its interaction with collagen and hence prevent platelet stimulation. In Crotalus atrox (Western diamondback rattlesnake), this protein is Zinc metalloproteinase-disintegrin-like VAP2B.